Reading from the N-terminus, the 505-residue chain is COMPASS component BRE2 (505 aa).

The B30.2/SPRY domain occupies 70-295; sequence SANPFFTILG…LKQETTNKEF (226 aa). Residue S227 is modified to Phosphoserine. A disordered region spans residues 271 to 290; the sequence is EPWREDAENGPSRKKLKQET. K318 is a binding site for DNA. Residues 398–420 form a disordered region; that stretch reads RDESNDKNTTSAKKKKQQQKKKK. The segment covering 409-420 has biased composition (basic residues); that stretch reads AKKKKQQQKKKK.

It belongs to the cclA family. Component of the Set1C/COMPASS complex which consists of SET1(2), BRE2(2), SPP1(2), SDC1(1), SHG1(1), SWD1(1), SWD2(1), and SWD3(1). Interacts directly with SDC1.

The protein localises to the nucleus. The protein resides in the chromosome. It localises to the telomere. Its function is as follows. Component of the Set1C/COMPASS complex that specifically mono-, di- and trimethylates histone H3 to form H3K4me1/2/3, which subsequently plays a role in telomere length maintenance and transcription elongation regulation. COMPASS recognizes ubiquitinated H2B on one face of the nucleosome which stimulates the methylation of H3 on the opposing face. This is COMPASS component BRE2 from Saccharomyces cerevisiae (strain ATCC 204508 / S288c) (Baker's yeast).